The following is a 445-amino-acid chain: DDB1- and CUL4-associated factor 13 (445 aa).

WD repeat units lie at residues 64-104, 107-146, 152-191, 194-234, 236-276, 280-319, and 323-362; these read GHRD…CSRT, AHDGFVRGLCVRFCGTSFFTVGDDKTVKQWAMESPGYGEK, TILGKTVFTGIDHHVKDAVFATCGQQVDIWDEQRSAPMRS, WGVD…PLKK, ILEM…SPVK, DHVSAVLDVDYSPTGKELVSASFDKSIRIFPVQSGHSREV, and KRMQHVTCVRWSADNKYVLCGSDEMNIRIWKANASEKLGV. The tract at residues 353–441 is required for nucleolar location; sequence KANASEKLGV…IPSEKKKHVL (89 aa). 2 stretches are compositionally biased toward basic residues: residues 413-426 and 436-445; these read ARRKKDVNRRKHSK and KKKHVLAVVE. The disordered stretch occupies residues 413 to 445; sequence ARRKKDVNRRKHSKPGSVPIPSEKKKHVLAVVE.

It belongs to the WD repeat DCAF13/WDSOF1 family. Part of the small subunit (SSU) processome, composed of more than 70 proteins and the RNA chaperone small nucleolar RNA (snoRNA) U3. Component of the DCX(DCAF13) E3 ubiquitin ligase complex, at least composed of CUL4 (CUL4A or CUL4B), DDB1, DCAF13 and RBX1.

Its subcellular location is the nucleus. It localises to the nucleolus. The protein operates within protein modification; protein ubiquitination. Part of the small subunit (SSU) processome, first precursor of the small eukaryotic ribosomal subunit. During the assembly of the SSU processome in the nucleolus, many ribosome biogenesis factors, an RNA chaperone and ribosomal proteins associate with the nascent pre-rRNA and work in concert to generate RNA folding, modifications, rearrangements and cleavage as well as targeted degradation of pre-ribosomal RNA by the RNA exosome. In terms of biological role, substrate-recognition component of a DCX (DDB1-CUL4-X-box) E3 ubiquitin-protein ligase complex. This Xenopus laevis (African clawed frog) protein is DDB1- and CUL4-associated factor 13 (dcaf13).